A 160-amino-acid polypeptide reads, in one-letter code: Cyclic pyranopterin monophosphate synthase (160 aa).

Substrate contacts are provided by residues 74–76 (LSH) and 112–113 (ME). The active site involves aspartate 127.

Belongs to the MoaC family. In terms of assembly, homohexamer; trimer of dimers.

The catalysed reaction is (8S)-3',8-cyclo-7,8-dihydroguanosine 5'-triphosphate = cyclic pyranopterin phosphate + diphosphate. The protein operates within cofactor biosynthesis; molybdopterin biosynthesis. In terms of biological role, catalyzes the conversion of (8S)-3',8-cyclo-7,8-dihydroguanosine 5'-triphosphate to cyclic pyranopterin monophosphate (cPMP). This chain is Cyclic pyranopterin monophosphate synthase, found in Pelobacter propionicus (strain DSM 2379 / NBRC 103807 / OttBd1).